Reading from the N-terminus, the 354-residue chain is Clavesin-1 (354 aa).

The CRAL-TRIO domain occupies 118–279 (IKRALIDGFP…EFGGTLPPYD (162 aa)). The disordered stretch occupies residues 317–354 (RECSPKPMKRSQSVVEAGTLKHEEKGENENTQPLLALD). Residues 335–344 (TLKHEEKGEN) show a composition bias toward basic and acidic residues. Residues 345 to 354 (ENTQPLLALD) show a composition bias toward polar residues.

Forms a complex with clathrin heavy chain and gamma-adaptin. In terms of tissue distribution, expressed in brain with no expression detected in non-neuronal tissues (at protein level).

The protein localises to the golgi apparatus. The protein resides in the trans-Golgi network membrane. It is found in the early endosome membrane. It localises to the cytoplasmic vesicle. Its subcellular location is the clathrin-coated vesicle. Its function is as follows. Required for normal morphology of late endosomes and/or lysosomes in neurons. Binds phosphatidylinositol 3,5-bisphosphate (PtdIns(3,5)P2). This Rattus norvegicus (Rat) protein is Clavesin-1.